A 286-amino-acid chain; its full sequence is Ribose-5-phosphate isomerase (286 aa).

Belongs to the ribose 5-phosphate isomerase family.

It is found in the cytoplasm. It carries out the reaction aldehydo-D-ribose 5-phosphate = D-ribulose 5-phosphate. The protein operates within carbohydrate degradation; pentose phosphate pathway; D-ribose 5-phosphate from D-ribulose 5-phosphate (non-oxidative stage): step 1/1. The sequence is that of Ribose-5-phosphate isomerase (RKI1) from Mycosarcoma maydis (Corn smut fungus).